Consider the following 635-residue polypeptide: Threonine--tRNA ligase (635 aa).

Residues 1-61 form the TGS domain; sequence MIKITLKDGK…HKDSSLEILT (61 aa). The catalytic stretch occupies residues 242-532; the sequence is DHRKLGKELD…LIEQYAGAFP (291 aa). 3 residues coordinate Zn(2+): Cys333, His384, and His509.

The protein belongs to the class-II aminoacyl-tRNA synthetase family. In terms of assembly, homodimer. Requires Zn(2+) as cofactor.

Its subcellular location is the cytoplasm. The catalysed reaction is tRNA(Thr) + L-threonine + ATP = L-threonyl-tRNA(Thr) + AMP + diphosphate + H(+). Catalyzes the attachment of threonine to tRNA(Thr) in a two-step reaction: L-threonine is first activated by ATP to form Thr-AMP and then transferred to the acceptor end of tRNA(Thr). Also edits incorrectly charged L-seryl-tRNA(Thr). This Clostridium botulinum (strain ATCC 19397 / Type A) protein is Threonine--tRNA ligase.